Reading from the N-terminus, the 230-residue chain is uncharacterized protein (230 aa).

The first 18 residues, 1 to 18 (MRQYTSKSILFMTAIALS), serve as a signal peptide directing secretion.

This is an uncharacterized protein from Pasteurella multocida (strain Pm70).